Reading from the N-terminus, the 523-residue chain is L-tyrosine:2-oxoglutarate aminotransferase ucdG (523 aa).

It belongs to the class-I pyridoxal-phosphate-dependent aminotransferase family. As to quaternary structure, homodimer. The cofactor is pyridoxal 5'-phosphate.

Its subcellular location is the cytoplasm. It carries out the reaction L-tyrosine + 2-oxoglutarate = 3-(4-hydroxyphenyl)pyruvate + L-glutamate. The protein operates within secondary metabolite biosynthesis. Its function is as follows. Nonribosomal peptide synthetase that mediates the biosynthesis of usterphenyllins and uscandidusins, p-terphenyl derivatives. Within the pathway, ucdG is probably involved in the conversion of L-tyrosine into 4-hydroxyphenylpyruvate (HPPA) as a precursor for the usterphenyllin and uscandidusin biosynthesis. UcdE further prenylates position C-14 of ring C of usterphenyllin B to form usterphenyllin A. The pathway begin with the biosynthesis of 4-hydroxyphenylpyruvate (HPPA) from L-tyrosine, possibly by the aminotransferase ucdG. The nonribosomal peptide synthetase ucdA then condenses two HPPA units to produce atromentin. The key step in this pathway is the reduction and dehydration of atromentin to form a terphenyl triol intermediate, performed by the NAD-dependent dehydrogenase ucdB. Further O-methylation by the methyltransferase ucdC forms terphenyllin carrying two methoxy moieties at C-9 and C-12, and subsequent dihydroxylation at C-3 of ring A and C-15 of ring C by the flavin-dependent oxygenase ucdD leads to 3,15-dihydroxyterphenyllin. Prenylation by ucdE at position C-5 of ring A forms usterphenyllin B, and is followed by a second prenylation at position C-14 of ring C to form usterphenyllin A. The following furan ring formation that leads to uscandidusins A and B was proven to be an unexpected spontaneous non-enzymatic reaction. The protein is L-tyrosine:2-oxoglutarate aminotransferase ucdG of Aspergillus ustus.